A 198-amino-acid polypeptide reads, in one-letter code: Nudix hydrolase 21, chloroplastic (198 aa).

The N-terminal 37 residues, Met1–Pro37, are a transit peptide targeting the chloroplast. The Nudix hydrolase domain maps to Gly59–Ile191. Residues Gly98–Gly119 carry the Nudix box motif. 2 residues coordinate Mg(2+): Glu113 and Glu117.

Belongs to the Nudix hydrolase family. The cofactor is Mg(2+). Mn(2+) serves as cofactor. In terms of tissue distribution, expressed in roots, leaves, stems and inflorescences.

The protein localises to the plastid. Its subcellular location is the chloroplast. In terms of biological role, probably mediates the hydrolysis of some nucleoside diphosphate derivatives. This chain is Nudix hydrolase 21, chloroplastic (NUDT21), found in Arabidopsis thaliana (Mouse-ear cress).